Reading from the N-terminus, the 156-residue chain is 6,7-dimethyl-8-ribityllumazine synthase (156 aa).

5-amino-6-(D-ribitylamino)uracil is bound by residues Phe23, 57–59 (AYE), and 81–83 (AII). Residue 86 to 87 (GT) participates in (2S)-2-hydroxy-3-oxobutyl phosphate binding. The active-site Proton donor is the His89. Residue Phe114 coordinates 5-amino-6-(D-ribitylamino)uracil. A (2S)-2-hydroxy-3-oxobutyl phosphate-binding site is contributed by Arg128.

Belongs to the DMRL synthase family.

It carries out the reaction (2S)-2-hydroxy-3-oxobutyl phosphate + 5-amino-6-(D-ribitylamino)uracil = 6,7-dimethyl-8-(1-D-ribityl)lumazine + phosphate + 2 H2O + H(+). Its pathway is cofactor biosynthesis; riboflavin biosynthesis; riboflavin from 2-hydroxy-3-oxobutyl phosphate and 5-amino-6-(D-ribitylamino)uracil: step 1/2. In terms of biological role, catalyzes the formation of 6,7-dimethyl-8-ribityllumazine by condensation of 5-amino-6-(D-ribitylamino)uracil with 3,4-dihydroxy-2-butanone 4-phosphate. This is the penultimate step in the biosynthesis of riboflavin. The protein is 6,7-dimethyl-8-ribityllumazine synthase of Helicobacter acinonychis (strain Sheeba).